The sequence spans 427 residues: Serine--tRNA ligase (427 aa).

Position 230–232 (230–232 (TAE)) interacts with L-serine. 261–263 (RAE) provides a ligand contact to ATP. Glu284 is an L-serine binding site. 348–351 (EISS) provides a ligand contact to ATP. Residue Ser384 coordinates L-serine.

It belongs to the class-II aminoacyl-tRNA synthetase family. Type-1 seryl-tRNA synthetase subfamily. Homodimer. The tRNA molecule binds across the dimer.

Its subcellular location is the cytoplasm. The catalysed reaction is tRNA(Ser) + L-serine + ATP = L-seryl-tRNA(Ser) + AMP + diphosphate + H(+). The enzyme catalyses tRNA(Sec) + L-serine + ATP = L-seryl-tRNA(Sec) + AMP + diphosphate + H(+). It functions in the pathway aminoacyl-tRNA biosynthesis; selenocysteinyl-tRNA(Sec) biosynthesis; L-seryl-tRNA(Sec) from L-serine and tRNA(Sec): step 1/1. Functionally, catalyzes the attachment of serine to tRNA(Ser). Is also able to aminoacylate tRNA(Sec) with serine, to form the misacylated tRNA L-seryl-tRNA(Sec), which will be further converted into selenocysteinyl-tRNA(Sec). The sequence is that of Serine--tRNA ligase from Syntrophomonas wolfei subsp. wolfei (strain DSM 2245B / Goettingen).